Here is a 337-residue protein sequence, read N- to C-terminus: Fructose-1,6-bisphosphatase class 1 (337 aa).

Mg(2+) is bound by residues glutamate 92, aspartate 114, leucine 116, and aspartate 117. Residues 117 to 120, asparagine 209, and lysine 275 contribute to the substrate site; that span reads DGSS. Glutamate 281 is a Mg(2+) binding site.

This sequence belongs to the FBPase class 1 family. Homotetramer. It depends on Mg(2+) as a cofactor.

It localises to the cytoplasm. The catalysed reaction is beta-D-fructose 1,6-bisphosphate + H2O = beta-D-fructose 6-phosphate + phosphate. Its pathway is carbohydrate biosynthesis; gluconeogenesis. In Thiobacillus denitrificans (strain ATCC 25259 / T1), this protein is Fructose-1,6-bisphosphatase class 1.